Here is a 279-residue protein sequence, read N- to C-terminus: MEKNCGSGQNKLKALRMHIYFEVDFQEQAQHYQAVLYSRGVTVDLQPIEKLNARFLRLNPDLALCVDENGLWLSANGMKMQPDWKAEIPRLKRASLKSEMIARACQLGEKPVLVDATAGLGHDSLLMAYLGAQIQLVERHPILFTLLEDSKAQAQRDPFLSQFMDRIQLLFADSASYLQQLDQEAKTVDVVYLDPMFPQRDQNQQAIKKQAQVKKQMQLLHLLLPEDGEMDLGDHLLELAKKVVKRVIVKRPRHAIFLANQEPAHQWQGDACRFDAYFQ.

S-adenosyl-L-methionine contacts are provided by residues E138–R139 and D194.

This sequence belongs to the methyltransferase superfamily. RsmJ family.

The protein localises to the cytoplasm. It carries out the reaction guanosine(1516) in 16S rRNA + S-adenosyl-L-methionine = N(2)-methylguanosine(1516) in 16S rRNA + S-adenosyl-L-homocysteine + H(+). Specifically methylates the guanosine in position 1516 of 16S rRNA. In Acinetobacter baumannii (strain ACICU), this protein is Ribosomal RNA small subunit methyltransferase J.